Here is a 523-residue protein sequence, read N- to C-terminus: GMP synthase [glutamine-hydrolyzing] (523 aa).

One can recognise a Glutamine amidotransferase type-1 domain in the interval 8-205 (KILILDFGSQ…VVDICGCETN (198 aa)). Residue Cys-85 is the Nucleophile of the active site. Active-site residues include His-179 and Glu-181. The 193-residue stretch at 206-398 (WTAENIIEDA…LGLPAEMLNR (193 aa)) folds into the GMPS ATP-PPase domain. An ATP-binding site is contributed by 233–239 (SGGVDSS).

Homodimer.

The catalysed reaction is XMP + L-glutamine + ATP + H2O = GMP + L-glutamate + AMP + diphosphate + 2 H(+). It participates in purine metabolism; GMP biosynthesis; GMP from XMP (L-Gln route): step 1/1. Functionally, catalyzes the synthesis of GMP from XMP. The protein is GMP synthase [glutamine-hydrolyzing] of Histophilus somni (strain 129Pt) (Haemophilus somnus).